The sequence spans 70 residues: Cytoinsectotoxin-2c (70 aa).

It belongs to the cationic peptide 06 (cytoinsectotoxin) family. In terms of tissue distribution, expressed by the venom gland.

Its subcellular location is the secreted. In terms of biological role, insecticidal and antimicrobial peptide. Has insecticidal activity against larvae of flesh fly S.carnaria. Has antibacterial activity against Gram-positive bacterium B.subtilis B-501 (MIC=1.25 uM) and Gram-negative bacterium E.coli DH5alpha (MIC=2.5 uM). The protein is Cytoinsectotoxin-2c of Lachesana tarabaevi (Spider).